The following is a 340-amino-acid chain: Putative D-lactate dehydrogenase (340 aa).

Residues 153–154 (NI), Asp174, 206–207 (TP), 233–235 (VSR), and Asp259 contribute to the NAD(+) site. The active site involves Arg235. Glu264 is a catalytic residue. His296 serves as the catalytic Proton donor.

This sequence belongs to the D-isomer specific 2-hydroxyacid dehydrogenase family.

It catalyses the reaction (R)-lactate + NAD(+) = pyruvate + NADH + H(+). This chain is Putative D-lactate dehydrogenase (ldhA), found in Dictyostelium discoideum (Social amoeba).